The following is a 610-amino-acid chain: Autophagy-related protein 22-1 (610 aa).

The span at 1–11 (MAFTPSSPPSP) shows a compositional bias: pro residues. The interval 1–29 (MAFTPSSPPSPAADASQRPSRYPGEDTTP) is disordered. The chain crosses the membrane as a helical span at residues 35 to 55 (ILGWYAYGIAAEVFAVCGVGS). Asn-90 carries an N-linked (GlcNAc...) asparagine glycan. Helical transmembrane passes span 120–140 (SFAM…LISF), 152–171 (TLLL…FVFV), and 189–209 (CLGS…ANDP). The interval 229–265 (GQFEPRDSFSERNPEFESQYTPGIGLGSKPSTNATSP) is disordered. Positions 232 to 243 (EPRDSFSERNPE) are enriched in basic and acidic residues. Asn-261 is a glycosylation site (N-linked (GlcNAc...) asparagine). Helical transmembrane passes span 278–298 (VGLG…LLFA), 310–330 (TLPL…FTMV), 384–404 (VFLV…GTAI), 418–438 (VGCL…LWPV), 453–473 (LCIA…IPLF), 488–510 (FPLA…SFFG), 522–544 (YALY…GMLI), and 553–573 (GFFF…MVNA). Residues 588–610 (AKGQESETGEPGEEAEGLLARGA) form a disordered region. Residues 594–603 (ETGEPGEEAE) are compositionally biased toward acidic residues.

Belongs to the ATG22 family.

It localises to the vacuole membrane. Its function is as follows. Vacuolar effluxer which mediate the efflux of amino acids resulting from autophagic degradation. The release of autophagic amino acids allows the maintenance of protein synthesis and viability during nitrogen starvation. This is Autophagy-related protein 22-1 (atg22-1) from Aspergillus terreus (strain NIH 2624 / FGSC A1156).